The following is a 138-amino-acid chain: Putative pre-16S rRNA nuclease (138 aa).

Belongs to the YqgF nuclease family.

Its subcellular location is the cytoplasm. In terms of biological role, could be a nuclease involved in processing of the 5'-end of pre-16S rRNA. The protein is Putative pre-16S rRNA nuclease of Caldicellulosiruptor bescii (strain ATCC BAA-1888 / DSM 6725 / KCTC 15123 / Z-1320) (Anaerocellum thermophilum).